Reading from the N-terminus, the 255-residue chain is NAD kinase (255 aa).

Residue D44 is the Proton acceptor of the active site. NAD(+) is bound by residues 44–45 (DG), H49, 114–115 (NE), D144, A152, 155–160 (SAYNLS), and Q216.

The protein belongs to the NAD kinase family. Requires a divalent metal cation as cofactor.

Its subcellular location is the cytoplasm. It catalyses the reaction NAD(+) + ATP = ADP + NADP(+) + H(+). In terms of biological role, involved in the regulation of the intracellular balance of NAD and NADP, and is a key enzyme in the biosynthesis of NADP. Catalyzes specifically the phosphorylation on 2'-hydroxyl of the adenosine moiety of NAD to yield NADP. In Rickettsia bellii (strain OSU 85-389), this protein is NAD kinase.